The primary structure comprises 45 residues: Large ribosomal subunit protein bL34 (45 aa).

Positions 1 to 45 (MTKRTFGGTSRKRKRVSGFRVRMRTHTGRSVIRSRRKKGRSRIAV) are disordered. Positions 10–45 (SRKRKRVSGFRVRMRTHTGRSVIRSRRKKGRSRIAV) are enriched in basic residues.

It belongs to the bacterial ribosomal protein bL34 family.

The polypeptide is Large ribosomal subunit protein bL34 (Prochlorococcus marinus (strain SARG / CCMP1375 / SS120)).